The chain runs to 392 residues: Tryptophan synthase beta chain (392 aa).

K84 carries the N6-(pyridoxal phosphate)lysine modification.

Belongs to the TrpB family. Tetramer of two alpha and two beta chains. Pyridoxal 5'-phosphate serves as cofactor.

The catalysed reaction is (1S,2R)-1-C-(indol-3-yl)glycerol 3-phosphate + L-serine = D-glyceraldehyde 3-phosphate + L-tryptophan + H2O. The protein operates within amino-acid biosynthesis; L-tryptophan biosynthesis; L-tryptophan from chorismate: step 5/5. Functionally, the beta subunit is responsible for the synthesis of L-tryptophan from indole and L-serine. This chain is Tryptophan synthase beta chain, found in Campylobacter jejuni subsp. jejuni serotype O:6 (strain 81116 / NCTC 11828).